Consider the following 125-residue polypeptide: Large ribosomal subunit protein uL22 (125 aa).

The protein belongs to the universal ribosomal protein uL22 family. In terms of assembly, part of the 50S ribosomal subunit.

Functionally, this protein binds specifically to 23S rRNA; its binding is stimulated by other ribosomal proteins, e.g. L4, L17, and L20. It is important during the early stages of 50S assembly. It makes multiple contacts with different domains of the 23S rRNA in the assembled 50S subunit and ribosome. The globular domain of the protein is located near the polypeptide exit tunnel on the outside of the subunit, while an extended beta-hairpin is found that lines the wall of the exit tunnel in the center of the 70S ribosome. This is Large ribosomal subunit protein uL22 from Acetivibrio thermocellus (strain ATCC 27405 / DSM 1237 / JCM 9322 / NBRC 103400 / NCIMB 10682 / NRRL B-4536 / VPI 7372) (Clostridium thermocellum).